Reading from the N-terminus, the 139-residue chain is Putative nickel-responsive regulator (139 aa).

Histidine 79, histidine 90, histidine 92, and cysteine 98 together coordinate Ni(2+).

The protein belongs to the transcriptional regulatory CopG/NikR family. The cofactor is Ni(2+).

Transcriptional regulator. The protein is Putative nickel-responsive regulator of Anaeromyxobacter sp. (strain K).